The primary structure comprises 349 residues: MSKETLILLYGGRSAEREVSVLSAESVMRAVNYSRFVVKTYFITKGGEFIKTQEFTDKPAEEEKLLTNDLAESYPKISPAAIYEKAAVVFPVLHGPMGEDGSIQGFLEILRLAYVGPNILSASSTMDKLLAKHVFEAVGVPQVPYVAAFADENQGEIAQEVVEKLEFPVFVKPANMGSSVGISKVDDLADLQPALSEAYKYDNRVVIEQGVDAREIECAVLGNNSDVSATLPGEVVKDVEFYDYNSKYIDNKIQMDIPAKVPADLAQKMQEYAIKAYKAVNGTGLSRCDFFVTKDGNVYLNEINAIPGFTQWSMYPLLWENMGLSYSDLIEKLVDLAKETFETRENHLL.

One can recognise an ATP-grasp domain in the interval 132–335; sequence KHVFEAVGVP…YSDLIEKLVD (204 aa). 162-217 lines the ATP pocket; it reads VEKLEFPVFVKPANMGSSVGISKVDDLADLQPALSEAYKYDNRVVIEQGVDAREIE. Mg(2+) contacts are provided by aspartate 289, glutamate 302, and asparagine 304.

The protein belongs to the D-alanine--D-alanine ligase family. Requires Mg(2+) as cofactor. It depends on Mn(2+) as a cofactor.

Its subcellular location is the cytoplasm. It carries out the reaction 2 D-alanine + ATP = D-alanyl-D-alanine + ADP + phosphate + H(+). Its pathway is cell wall biogenesis; peptidoglycan biosynthesis. Functionally, cell wall formation. The sequence is that of D-alanine--D-alanine ligase from Lactococcus lactis subsp. lactis (strain IL1403) (Streptococcus lactis).